The following is a 338-amino-acid chain: Phenylalanine--tRNA ligase alpha subunit (338 aa).

A Mg(2+)-binding site is contributed by E252.

The protein belongs to the class-II aminoacyl-tRNA synthetase family. Phe-tRNA synthetase alpha subunit type 1 subfamily. Tetramer of two alpha and two beta subunits. Mg(2+) is required as a cofactor.

The protein localises to the cytoplasm. It catalyses the reaction tRNA(Phe) + L-phenylalanine + ATP = L-phenylalanyl-tRNA(Phe) + AMP + diphosphate + H(+). The chain is Phenylalanine--tRNA ligase alpha subunit from Fusobacterium nucleatum subsp. nucleatum (strain ATCC 25586 / DSM 15643 / BCRC 10681 / CIP 101130 / JCM 8532 / KCTC 2640 / LMG 13131 / VPI 4355).